The following is a 630-amino-acid chain: Transposase B from transposon PsiTn554 (630 aa).

The Core-binding (CB) domain maps to T216–H302. One can recognise a Tyr recombinase domain in the interval A326–T513. Residues R363, K391, H465, R468, and H491 contribute to the active site. The active-site O-(3'-phospho-DNA)-tyrosine intermediate is the Y500.

Belongs to the 'phage' integrase family.

The polypeptide is Transposase B from transposon PsiTn554 (tnpB) (Staphylococcus aureus).